The following is an 85-amino-acid chain: Sodium channel neurotoxin MeuNaTxalpha-2 (85 aa).

The signal sequence occupies residues 1–19 (MNYLVMISLALLLMTGVES). One can recognise an LCN-type CS-alpha/beta domain in the interval 21 to 83 (RDAYIANDRN…VPIRIPGECR (63 aa)). Cystine bridges form between C31-C82, C35-C55, C41-C65, and C45-C67. Position 83 is an arginine amide (R83).

It belongs to the long (4 C-C) scorpion toxin superfamily. Sodium channel inhibitor family. Alpha subfamily. Expressed by the venom gland.

Its subcellular location is the secreted. Alpha toxins bind voltage-independently at site-3 of sodium channels (Nav) and inhibit the inactivation of the activated channels, thereby blocking neuronal transmission. This toxin inhibits inactivation of Nav1.4/SCN4A (EC(50)=2.23 uM) and drosophila DmNav1 (EC(50)=220 nM). The toxin (1 uM) does not significantly shift the midpoint of activation at the two channels, but induces a significant depolarizing shift in the V(1/2) of inactivation of the channels. In addition, the toxin accelerates the recovery from fast inactivation in Nav1.4/SCN4A and DmNav1. It also shows antimicrobial activity. In Mesobuthus eupeus (Lesser Asian scorpion), this protein is Sodium channel neurotoxin MeuNaTxalpha-2.